A 279-amino-acid chain; its full sequence is Energy-coupling factor transporter ATP-binding protein EcfA1 (279 aa).

The 236-residue stretch at 5-240 folds into the ABC transporter domain; it reads IELKKVTFNY…GDELLQLGLD (236 aa). ATP is bound at residue 40-47; it reads GHNGSGKS.

The protein belongs to the ABC transporter superfamily. Energy-coupling factor EcfA family. In terms of assembly, forms a stable energy-coupling factor (ECF) transporter complex composed of 2 membrane-embedded substrate-binding proteins (S component), 2 ATP-binding proteins (A component) and 2 transmembrane proteins (T component).

The protein resides in the cell membrane. Its function is as follows. ATP-binding (A) component of a common energy-coupling factor (ECF) ABC-transporter complex. Unlike classic ABC transporters this ECF transporter provides the energy necessary to transport a number of different substrates. The polypeptide is Energy-coupling factor transporter ATP-binding protein EcfA1 (Streptococcus pyogenes serotype M12 (strain MGAS2096)).